We begin with the raw amino-acid sequence, 86 residues long: Large ribosomal subunit protein uL23 (86 aa).

It belongs to the universal ribosomal protein uL23 family. As to quaternary structure, part of the 50S ribosomal subunit. Contacts protein L29.

Its function is as follows. Binds to 23S rRNA. One of the proteins that surrounds the polypeptide exit tunnel on the outside of the ribosome. The sequence is that of Large ribosomal subunit protein uL23 from Methanothermobacter thermautotrophicus (strain ATCC 29096 / DSM 1053 / JCM 10044 / NBRC 100330 / Delta H) (Methanobacterium thermoautotrophicum).